The chain runs to 1156 residues: Nuclear pore-associated protein 1 (1156 aa).

8 disordered regions span residues 1–60 (MGNL…RRPS), 155–204 (EGPR…FRCS), 219–266 (NSMS…PEPA), 481–515 (GGSYNSVVGAAPLTSDPPTPPSSTPSFKPPVTRES), 680–703 (TLVNSASTASSSKPPIETNAMHTT), 732–786 (NTQP…KTSL), 872–915 (STSF…SSFI), and 1026–1046 (APGPSSTSGELNIGQGQSGTP). Over residues 50–59 (LFRRNARRRP) the composition is skewed to basic residues. Basic and acidic residues predominate over residues 156–165 (GPRRVKKDED). 2 stretches are compositionally biased toward polar residues: residues 179–197 (PLSSGEASSTSRSQGTQGD) and 219–231 (NSMSEKAQASPAS). Composition is skewed to polar residues over residues 680–692 (TLVNSASTASSSK), 732–750 (NTQPSGNTASVQGSTSLPA), 884–915 (TTTSSHPLNTGSISHSTLGATDGQQKSDSSFI), and 1028–1046 (GPSSTSGELNIGQGQSGTP).

As to quaternary structure, associates with the nuclear pore complex (NPC). As to expression, testis-specific in adults. In fetal brain expressed only from the paternal allele.

Its subcellular location is the nucleus. The protein localises to the nucleoplasm. It is found in the nucleus inner membrane. May be involved in spermatogenesis. The chain is Nuclear pore-associated protein 1 (NPAP1) from Homo sapiens (Human).